The sequence spans 405 residues: Tyrosine--tRNA ligase (405 aa).

A 'HIGH' region motif is present at residues Pro-41–His-50. Positions Lys-225 to Ser-229 match the 'KMSKS' region motif. Lys-228 is an ATP binding site. Residues Glu-342–Ile-404 form the S4 RNA-binding domain.

The protein belongs to the class-I aminoacyl-tRNA synthetase family. TyrS type 2 subfamily. As to quaternary structure, homodimer.

It localises to the cytoplasm. The enzyme catalyses tRNA(Tyr) + L-tyrosine + ATP = L-tyrosyl-tRNA(Tyr) + AMP + diphosphate + H(+). In terms of biological role, catalyzes the attachment of tyrosine to tRNA(Tyr) in a two-step reaction: tyrosine is first activated by ATP to form Tyr-AMP and then transferred to the acceptor end of tRNA(Tyr). This chain is Tyrosine--tRNA ligase, found in Leptospira interrogans serogroup Icterohaemorrhagiae serovar Lai (strain 56601).